The chain runs to 224 residues: 7-cyano-7-deazaguanine synthase (224 aa).

8–18 (LSGGMDSAAVI) lines the ATP pocket. Zn(2+) is bound by residues C186, C196, C199, and C202.

Belongs to the QueC family. Requires Zn(2+) as cofactor.

The catalysed reaction is 7-carboxy-7-deazaguanine + NH4(+) + ATP = 7-cyano-7-deazaguanine + ADP + phosphate + H2O + H(+). Its pathway is purine metabolism; 7-cyano-7-deazaguanine biosynthesis. Catalyzes the ATP-dependent conversion of 7-carboxy-7-deazaguanine (CDG) to 7-cyano-7-deazaguanine (preQ(0)). In Xanthomonas axonopodis pv. citri (strain 306), this protein is 7-cyano-7-deazaguanine synthase.